A 194-amino-acid polypeptide reads, in one-letter code: ATP synthase subunit b 1 (194 aa).

Residues 1–21 (MLLGTVVTVLSTLPAIAYAMD) form a helical membrane-spanning segment.

This sequence belongs to the ATPase B chain family. In terms of assembly, F-type ATPases have 2 components, F(1) - the catalytic core - and F(0) - the membrane proton channel. F(1) has five subunits: alpha(3), beta(3), gamma(1), delta(1), epsilon(1). F(0) has three main subunits: a(1), b(2) and c(10-14). The alpha and beta chains form an alternating ring which encloses part of the gamma chain. F(1) is attached to F(0) by a central stalk formed by the gamma and epsilon chains, while a peripheral stalk is formed by the delta and b chains.

Its subcellular location is the cell inner membrane. In terms of biological role, f(1)F(0) ATP synthase produces ATP from ADP in the presence of a proton or sodium gradient. F-type ATPases consist of two structural domains, F(1) containing the extramembraneous catalytic core and F(0) containing the membrane proton channel, linked together by a central stalk and a peripheral stalk. During catalysis, ATP synthesis in the catalytic domain of F(1) is coupled via a rotary mechanism of the central stalk subunits to proton translocation. Functionally, component of the F(0) channel, it forms part of the peripheral stalk, linking F(1) to F(0). In Granulibacter bethesdensis (strain ATCC BAA-1260 / CGDNIH1), this protein is ATP synthase subunit b 1.